The sequence spans 120 residues: Putative B3 domain-containing protein At3g28853 (120 aa).

A DNA-binding region (TF-B3) is located at residues 19 to 120; it reads INKRLTQSDV…DKSNEVFYII (102 aa).

It is found in the nucleus. The sequence is that of Putative B3 domain-containing protein At3g28853 from Arabidopsis thaliana (Mouse-ear cress).